A 208-amino-acid polypeptide reads, in one-letter code: mRNA 3'-end-processing protein YTH1 (208 aa).

C3H1-type zinc fingers lie at residues 28–59, 61–88, 89–117, 118–145, and 147–170; these read DPDR…HVLP, FQNK…HEYN, LRKM…HIDP, ASKI…HIKK, and FCQR…HPQF.

It belongs to the CPSF4/YTH1 family. As to quaternary structure, component of the cleavage and polyadenylation factor (CPF) complex, which is composed of at least PTI1, SYC1, SSU72, GLC7, MPE1, REF2, PFS2, PTA1, YSH1/BRR5, SWD2, CFT2/YDH1, YTH1, CFT1/YHH1, FIP1 and PAP1. Interacts with FIP1 and YSH1.

Its subcellular location is the nucleus. Its function is as follows. RNA-binding component of the cleavage and polyadenylation factor (CPF) complex, which plays a key role in polyadenylation-dependent pre-mRNA 3'-end formation and cooperates with cleavage factors including the CFIA complex and NAB4/CFIB. The protein is mRNA 3'-end-processing protein YTH1 (YTH1) of Saccharomyces cerevisiae (strain ATCC 204508 / S288c) (Baker's yeast).